A 338-amino-acid polypeptide reads, in one-letter code: 1-aminocyclopropane-1-carboxylate deaminase (338 aa).

N6-(pyridoxal phosphate)lysine is present on K51. S78 serves as the catalytic Nucleophile.

The protein belongs to the ACC deaminase/D-cysteine desulfhydrase family. Homotrimer. Pyridoxal 5'-phosphate serves as cofactor.

It carries out the reaction 1-aminocyclopropane-1-carboxylate + H2O = 2-oxobutanoate + NH4(+). In terms of biological role, catalyzes a cyclopropane ring-opening reaction, the irreversible conversion of 1-aminocyclopropane-1-carboxylate (ACC) to ammonia and alpha-ketobutyrate. Allows growth on ACC as a nitrogen source. This is 1-aminocyclopropane-1-carboxylate deaminase from Paraburkholderia phytofirmans (strain DSM 17436 / LMG 22146 / PsJN) (Burkholderia phytofirmans).